Consider the following 1508-residue polypeptide: Calponin homology domain-containing protein DDB_G0272472 (1508 aa).

Disordered stretches follow at residues 1 to 165 (MFRN…KNDF), 197 to 290 (DSEE…NLSP), 309 to 518 (DFKS…TSIV), 531 to 561 (AANA…LFND), 680 to 706 (KEKQ…EKEL), and 1036 to 1391 (KIEK…KKSA). Positions 81 to 107 (SSSPSTSTTTTTKSSSTTTTTTTSSSS) are enriched in low complexity. The segment covering 208-222 (PIKKKQSNDLEKNIF) has biased composition (basic and acidic residues). Low complexity-rich tracts occupy residues 234–251 (KQST…QKQP), 263–290 (FGDS…NLSP), and 315–332 (SNNT…KSKP). 2 stretches are compositionally biased toward basic and acidic residues: residues 337 to 346 (QKEEIKEVST) and 362 to 371 (VDEKPKERST). The span at 380 to 391 (KTVTVKSNNSFE) shows a compositional bias: polar residues. Over residues 395–438 (FGSTTTNDDGGDNDFSFTPATTPSSSSSTKATTTSPSSTTTTKS) the composition is skewed to low complexity. Residues 439–452 (NINIGQKSNKSVDQ) show a composition bias toward polar residues. Residues 455–498 (QFLNDIFQQEEQDKKRREEEAKLKQQQKQKEKEQIKDEIDDLFK) adopt a coiled-coil conformation. Residues 465–498 (EQDKKRREEEAKLKQQQKQKEKEQIKDEIDDLFK) show a composition bias toward basic and acidic residues. Composition is skewed to low complexity over residues 500 to 516 (SKPT…STTS) and 531 to 557 (AANA…KSTN). Basic and acidic residues predominate over residues 1036–1164 (KIEKEKEERD…DQEEKEKQLK (129 aa)). Composition is skewed to low complexity over residues 1165–1181 (EQQQ…TTTT) and 1189–1206 (DSDA…SSHS). Positions 1216-1225 (SKAKGRKKPT) are enriched in basic residues. Over residues 1226 to 1235 (RRELTKDGNR) the composition is skewed to basic and acidic residues. Over residues 1333 to 1355 (PTVTQTTTTTTTPPTTPPSSSVQ) the composition is skewed to low complexity. Residues 1362–1374 (RSFSGSSFMGINS) are compositionally biased toward polar residues. Residues 1397-1504 (MKALDVLLQW…YLSEFFKVMK (108 aa)) form the Calponin-homology (CH) domain.

The protein is Calponin homology domain-containing protein DDB_G0272472 of Dictyostelium discoideum (Social amoeba).